The primary structure comprises 630 residues: Ribonucleoside-diphosphate reductase large subunit (630 aa).

Substrate contacts are provided by residues Ser-67, Ala-82–Cys-83, Gly-111, Asn-317–Glu-321, and Pro-459–Ser-463. A disulfide bridge connects residues Cys-83 and Cys-334. Asn-317 (proton acceptor) is an active-site residue. Cys-319 functions as the Cysteine radical intermediate in the catalytic mechanism. Glu-321 functions as the Proton acceptor in the catalytic mechanism.

Belongs to the ribonucleoside diphosphate reductase large chain family. Heterotetramer composed of a homodimer of the large subunit (R1) and a homodimer of the small subunit (R2). Larger multisubunit protein complex are also active, composed of (R1)n(R2)n.

It carries out the reaction a 2'-deoxyribonucleoside 5'-diphosphate + [thioredoxin]-disulfide + H2O = a ribonucleoside 5'-diphosphate + [thioredoxin]-dithiol. With respect to regulation, under complex allosteric control mediated by deoxynucleoside triphosphates and ATP binding. The type of nucleotide bound at the specificity site determines substrate preference. It seems probable that ATP makes the enzyme reduce CDP and UDP, dGTP favors ADP reduction and dTTP favors GDP reduction. In terms of biological role, ribonucleoside-diphosphate reductase holoenzyme provides the precursors necessary for viral DNA synthesis. Allows virus growth in non-dividing cells. Catalyzes the biosynthesis of deoxyribonucleotides from the corresponding ribonucleotides. The sequence is that of Ribonucleoside-diphosphate reductase large subunit from Aedes vexans (Inland floodwater mosquito).